The primary structure comprises 427 residues: MSTSFENKATNRGVITFTISQDKIKPALDQAFNKIKKDLNAPGFRKGHMPRPVFNQRFGEEVLYEEALNIVLPAAYEGAVAELELDVVAQPKIDVVSMEKGQEWTLTAEVVTKPEVKLGDYKDLTVEVEASKEVTDEEVDAKVERERNNLAELVVKEEAAVEGDTVVIDFVGSVDGVEFDGGKGDNFSLELGSGQFIPGFEEQLVGAKAGDTVEVNVTFPENYQAEDLAGKAAKFVTTVHEVKAKEVPELDDELAKDIDEEVETLDELKAKYRKELEASKEAAYDDALEGAAIELAVENAEIVELPEEMVHDEVHRSVNEFMASMQRQGISPDMYFQLTGTSQEDLHKQHEAEADKRVKTNLVIEAIAKAEGFEASDDEIEKEINDLAAEYSMPVEQVRSLLSADMLKHDIVMKKAVEVITSSAKAK.

Residues glycine 163–proline 248 enclose the PPIase FKBP-type domain.

The protein belongs to the FKBP-type PPIase family. Tig subfamily.

The protein localises to the cytoplasm. It catalyses the reaction [protein]-peptidylproline (omega=180) = [protein]-peptidylproline (omega=0). Its function is as follows. Involved in protein export. Acts as a chaperone by maintaining the newly synthesized protein in an open conformation. Functions as a peptidyl-prolyl cis-trans isomerase. This is Trigger factor from Streptococcus equi subsp. zooepidemicus (strain MGCS10565).